Reading from the N-terminus, the 149-residue chain is uncharacterized protein (149 aa).

A disordered region spans residues 34–94; the sequence is HTPCLPKVPR…NPIGSQRIHS (61 aa). The span at 56–66 shows a compositional bias: basic and acidic residues; it reads QSPHRQGDRRR.

The protein localises to the mitochondrion. This is an uncharacterized protein from Arabidopsis thaliana (Mouse-ear cress).